Here is a 691-residue protein sequence, read N- to C-terminus: Alpha-1,4-glucan:maltose-1-phosphate maltosyltransferase (691 aa).

Alpha-maltose 1-phosphate is bound by residues lysine 280, glutamine 341, and aspartate 376. The Nucleophile role is filled by aspartate 411. Asparagine 412 contributes to the alpha-maltose 1-phosphate binding site. Glutamate 440 (proton donor) is an active-site residue. Position 550-551 (550-551 (KY)) interacts with alpha-maltose 1-phosphate.

This sequence belongs to the glycosyl hydrolase 13 family. GlgE subfamily. Homodimer.

The enzyme catalyses alpha-maltose 1-phosphate + [(1-&gt;4)-alpha-D-glucosyl](n) = [(1-&gt;4)-alpha-D-glucosyl](n+2) + phosphate. Its function is as follows. Maltosyltransferase that uses maltose 1-phosphate (M1P) as the sugar donor to elongate linear or branched alpha-(1-&gt;4)-glucans. Is involved in a branched alpha-glucan biosynthetic pathway from trehalose, together with TreS, Mak and GlgB. The chain is Alpha-1,4-glucan:maltose-1-phosphate maltosyltransferase from Arcanobacterium haemolyticum (strain ATCC 9345 / DSM 20595 / CCM 5947 / CCUG 17215 / LMG 16163 / NBRC 15585 / NCTC 8452 / 11018).